The chain runs to 252 residues: Imidazole glycerol phosphate synthase subunit HisF (252 aa).

Residues Asp-11 and Asp-130 contribute to the active site.

It belongs to the HisA/HisF family. As to quaternary structure, heterodimer of HisH and HisF.

It is found in the cytoplasm. It carries out the reaction 5-[(5-phospho-1-deoxy-D-ribulos-1-ylimino)methylamino]-1-(5-phospho-beta-D-ribosyl)imidazole-4-carboxamide + L-glutamine = D-erythro-1-(imidazol-4-yl)glycerol 3-phosphate + 5-amino-1-(5-phospho-beta-D-ribosyl)imidazole-4-carboxamide + L-glutamate + H(+). The protein operates within amino-acid biosynthesis; L-histidine biosynthesis; L-histidine from 5-phospho-alpha-D-ribose 1-diphosphate: step 5/9. Its function is as follows. IGPS catalyzes the conversion of PRFAR and glutamine to IGP, AICAR and glutamate. The HisF subunit catalyzes the cyclization activity that produces IGP and AICAR from PRFAR using the ammonia provided by the HisH subunit. This Bacillus cereus (strain ZK / E33L) protein is Imidazole glycerol phosphate synthase subunit HisF.